Reading from the N-terminus, the 421-residue chain is Ubiquitin-like modifier-activating enzyme 5 (421 aa).

5 residues coordinate ATP: Gly-89, Asp-110, Lys-133, Asn-156, and Asn-191. Zn(2+)-binding residues include Cys-233 and Cys-236. The Glycyl thioester intermediate role is filled by Cys-257. Positions 310 and 315 each coordinate Zn(2+).

This sequence belongs to the ubiquitin-activating E1 family. UBA5 subfamily.

In terms of biological role, E1-like enzyme which activates UFM1. This is Ubiquitin-like modifier-activating enzyme 5 from Oryza sativa subsp. japonica (Rice).